The sequence spans 178 residues: Natriuretic and helokinestatin peptides (178 aa).

The first 25 residues, 1–25, serve as a signal peptide directing secretion; sequence MNPRLACSTWLPLLLVLFTLDQGRA. Propeptides lie at residues 26–58, 69–73, 85–89, 103–112, and 123–146; these read NPVE…SEEN, ASDEN, ASEQKGPPFN, and AANE…RNKR. 2 disordered regions span residues 69–107 and 135–155; these read ASDE…SEQK and RSFE…GCFG. The cysteines at positions 153 and 169 are disulfide-linked.

The protein in the C-terminal section; belongs to the natriuretic peptide family. In terms of tissue distribution, expressed by the venom gland.

It localises to the secreted. Its function is as follows. Helokinestatins antagonize the vasodilatory actions of bradykinin at the B2 bradykinin receptor (BDKRB2), with helokinestatin-1 being the most potent antagonist. In terms of biological role, exhibits hypotensive and vasodepressor activities, possibly by targeting natriuretic peptide receptors NPR1 and NPR2. In Heloderma suspectum cinctum (Banded Gila monster), this protein is Natriuretic and helokinestatin peptides.